The primary structure comprises 141 residues: MLSADEKQLILHAWEKVHTHQEDFGAEALERMFTVYPQTKTYFHHFDLHHGSEQIRRHGKKVVVALENAVHHMDNLSAALCKLSDLHAYNLRVDPVNFKLLSHCFHVVLAGHLGEEYSPQVHVAYDKFLAAVSDVLAEKYR.

A Globin domain is found at 1-141; sequence MLSADEKQLI…VSDVLAEKYR (141 aa). Heme b contacts are provided by H58 and H87.

The protein belongs to the globin family. Heterotetramer of two alpha-D chains and two beta chains. Red blood cells.

Its function is as follows. Involved in oxygen transport from the lung to the various peripheral tissues. The sequence is that of Hemoglobin subunit alpha-D (HBAD) from Phrynops hilarii (Snake-necked turtle).